The primary structure comprises 903 residues: Protein translocase subunit SecA (903 aa).

ATP-binding positions include Gln89, 107 to 111 (GEGKT), and Asp502. Residues Cys886, Cys888, Cys897, and His898 each contribute to the Zn(2+) site.

This sequence belongs to the SecA family. Monomer and homodimer. Part of the essential Sec protein translocation apparatus which comprises SecA, SecYEG and auxiliary proteins SecDF-YajC and YidC. Zn(2+) is required as a cofactor.

Its subcellular location is the cell inner membrane. It is found in the cytoplasm. The enzyme catalyses ATP + H2O + cellular proteinSide 1 = ADP + phosphate + cellular proteinSide 2.. Functionally, part of the Sec protein translocase complex. Interacts with the SecYEG preprotein conducting channel. Has a central role in coupling the hydrolysis of ATP to the transfer of proteins into and across the cell membrane, serving both as a receptor for the preprotein-SecB complex and as an ATP-driven molecular motor driving the stepwise translocation of polypeptide chains across the membrane. The protein is Protein translocase subunit SecA of Rhizobium meliloti (strain 1021) (Ensifer meliloti).